Consider the following 190-residue polypeptide: Natural killer cells antigen CD94 (190 aa).

Over 1–10 (MAAFRTTAWR) the chain is Cytoplasmic. Residues 11-31 (LISGVLGVICLVLMAALGVLL) form a helical; Signal-anchor for type II membrane protein membrane-spanning segment. Residues 32 to 190 (KNSLTKRSVQ…FRYICKQQLI (159 aa)) lie on the Extracellular side of the membrane. 4 cysteine pairs are disulfide-bonded: cysteine 69–cysteine 81, cysteine 72–cysteine 83, cysteine 100–cysteine 185, and cysteine 163–cysteine 177. The 108-residue stretch at 79 to 186 (YQCNCYFISN…CEKKFRYICK (108 aa)) folds into the C-type lectin domain. 2 N-linked (GlcNAc...) asparagine glycosylation sites follow: asparagine 104 and asparagine 144.

As to quaternary structure, can form disulfide-bonded heterodimer with NKG2 family members KLRC1 and KLRC2. KLRD1-KLRC1 heterodimer interacts with peptide-bound MHC-E-B2M heterotrimeric complex. KLRD1 plays a prominent role in directly interacting with MHC-E. KLRD1-KLRC1 interacts with much higher affinity with peptide-bound MHC-E-B2M than KLRD1-KLRC2. Interacts with the adapter protein TYROBP/DAP12; this interaction is required for cell surface expression and cell activation.

The protein resides in the cell membrane. Immune receptor involved in self-nonself discrimination. In complex with KLRC1 or KLRC2 on cytotoxic and regulatory lymphocyte subsets, recognizes non-classical major histocompatibility (MHC) class Ib molecule MHC-E loaded with self-peptides derived from the signal sequence of classical MHC class Ia and non-classical MHC class Ib molecules. Enables cytotoxic cells to monitor the expression of MHC class I molecules in healthy cells and to tolerate self. Primarily functions as a ligand binding subunit as it lacks the capacity to signal. In terms of biological role, KLRD1-KLRC1 acts as an immune inhibitory receptor. Key inhibitory receptor on natural killer (NK) cells that regulates their activation and effector functions. Dominantly counteracts T cell receptor signaling on a subset of memory/effector CD8-positive T cells as part of an antigen-driven response to avoid autoimmunity. On intraepithelial CD8-positive gamma-delta regulatory T cells triggers TGFB1 secretion, which in turn limits the cytotoxic programming of intraepithelial CD8-positive alpha-beta T cells, distinguishing harmless from pathogenic antigens. In MHC-E-rich tumor microenvironment, acts as an immune inhibitory checkpoint and may contribute to progressive loss of effector functions of NK cells and tumor-specific T cells, a state known as cell exhaustion. Upon MHC-E-peptide binding, transmits intracellular signals through KLRC1 immunoreceptor tyrosine-based inhibition motifs (ITIMs) by recruiting INPP5D/SHIP-1 and INPPL1/SHIP-2 tyrosine phosphatases to ITIMs, and ultimately opposing signals transmitted by activating receptors through dephosphorylation of proximal signaling molecules. Functionally, KLRD1-KLRC2 acts as an immune activating receptor. On cytotoxic lymphocyte subsets recognizes MHC-E loaded with signal sequence-derived peptides from non-classical MHC class Ib MHC-G molecules, likely playing a role in the generation and effector functions of adaptive NK cells and in maternal-fetal tolerance during pregnancy. Regulates the effector functions of terminally differentiated cytotoxic lymphocyte subsets, and in particular may play a role in adaptive NK cell response to viral infection. Upon MHC-E-peptide binding, transmits intracellular signals via the adapter protein TYROBP/DAP12, triggering the phosphorylation of proximal signaling molecules and cell activation. This is Natural killer cells antigen CD94 (KLRD1) from Bos taurus (Bovine).